The primary structure comprises 138 residues: Small ribosomal subunit protein uS11 (138 aa).

Residues Met1 to Lys12 are compositionally biased toward low complexity. Residues Met1–His27 form a disordered region. The span at Lys13–Lys22 shows a compositional bias: basic residues.

The protein belongs to the universal ribosomal protein uS11 family. In terms of assembly, part of the 30S ribosomal subunit. Interacts with proteins S7 and S18. Binds to IF-3.

In terms of biological role, located on the platform of the 30S subunit, it bridges several disparate RNA helices of the 16S rRNA. Forms part of the Shine-Dalgarno cleft in the 70S ribosome. This Mycolicibacterium paratuberculosis (strain ATCC BAA-968 / K-10) (Mycobacterium paratuberculosis) protein is Small ribosomal subunit protein uS11.